A 514-amino-acid polypeptide reads, in one-letter code: ATP synthase subunit alpha (514 aa).

170–177 (GDRQTGKT) contacts ATP.

Belongs to the ATPase alpha/beta chains family. F-type ATPases have 2 components, CF(1) - the catalytic core - and CF(0) - the membrane proton channel. CF(1) has five subunits: alpha(3), beta(3), gamma(1), delta(1), epsilon(1). CF(0) has three main subunits: a(1), b(2) and c(9-12). The alpha and beta chains form an alternating ring which encloses part of the gamma chain. CF(1) is attached to CF(0) by a central stalk formed by the gamma and epsilon chains, while a peripheral stalk is formed by the delta and b chains.

The protein localises to the cell inner membrane. It carries out the reaction ATP + H2O + 4 H(+)(in) = ADP + phosphate + 5 H(+)(out). Functionally, produces ATP from ADP in the presence of a proton gradient across the membrane. The alpha chain is a regulatory subunit. This Acidithiobacillus ferridurans protein is ATP synthase subunit alpha.